The following is a 365-amino-acid chain: MSINLLDFDAKGLTGFCAEIGEKPFRARQLLRWIHRTGEADFDAMSDLAKGLREKLAAAAVIEPPKVISDHTASDGTRKWLLSVGAGNGIETVYIPETSRGTLCISSQVGCALACAFCSTGRQGFNRNLTVAEIIGQLWWANKALTETFTSEAGRERPITNIVMMGMGEPLTNFENVVTSLDLMLDDNAYGLSRRRVTVSTSGIIPAMDRLRERCPVALAVSLHAPNDALRDQLVPINRKYPIRELLGACERYLQSAPRDFITFEYVMLDGVNDSVAQARELVQLVRDIPCKLNLIPFNPFPDSGFRRSSANAVSRFRDVLMEAGLVTTVRKTRGDDIAAACGQLAGKVLDKTRRVPRNIAEAAG.

Glu-91 acts as the Proton acceptor in catalysis. One can recognise a Radical SAM core domain in the interval Glu-97–Asp-337. A disulfide bond links Cys-104 and Cys-342. [4Fe-4S] cluster is bound by residues Cys-111, Cys-115, and Cys-118. Residues Gly-168–Glu-169, Ser-200, Ser-222–His-224, and Asn-299 each bind S-adenosyl-L-methionine. Catalysis depends on Cys-342, which acts as the S-methylcysteine intermediate.

Belongs to the radical SAM superfamily. RlmN family. [4Fe-4S] cluster serves as cofactor.

Its subcellular location is the cytoplasm. The enzyme catalyses adenosine(2503) in 23S rRNA + 2 reduced [2Fe-2S]-[ferredoxin] + 2 S-adenosyl-L-methionine = 2-methyladenosine(2503) in 23S rRNA + 5'-deoxyadenosine + L-methionine + 2 oxidized [2Fe-2S]-[ferredoxin] + S-adenosyl-L-homocysteine. The catalysed reaction is adenosine(37) in tRNA + 2 reduced [2Fe-2S]-[ferredoxin] + 2 S-adenosyl-L-methionine = 2-methyladenosine(37) in tRNA + 5'-deoxyadenosine + L-methionine + 2 oxidized [2Fe-2S]-[ferredoxin] + S-adenosyl-L-homocysteine. Functionally, specifically methylates position 2 of adenine 2503 in 23S rRNA and position 2 of adenine 37 in tRNAs. m2A2503 modification seems to play a crucial role in the proofreading step occurring at the peptidyl transferase center and thus would serve to optimize ribosomal fidelity. The sequence is that of Dual-specificity RNA methyltransferase RlmN from Nitrosospira multiformis (strain ATCC 25196 / NCIMB 11849 / C 71).